The sequence spans 107 residues: Essential MCU regulator, mitochondrial (107 aa).

The N-terminal 47 residues, M1 to S47, are a transit peptide targeting the mitochondrion. Topologically, residues V48–F65 are mitochondrial matrix. A helical membrane pass occupies residues G66 to S85. The GXXXX[G/A/S] signature appears at G81–S85. At K86–D107 the chain is on the mitochondrial intermembrane side.

It belongs to the SMDT1/EMRE family. Component of the uniplex complex, composed of MCU, EMRE/SMDT1, MICU1 and MICU2 (or MICU3) in a 4:4:1:1 stoichiometry. The number of EMRE/SMDT1 molecules is hovewer variable, ranging from 1 to 4 copies per uniplex complex, leading to uniplex complexes with distinct gatekeeping profiles. Interacts (via its C-terminal poly-Asp tail) with MCUR1; the interaction is direct. Unprocessed form interacts (via transit peptide) with MAIP1. Undergoes proteolytic degradation in neurons: degraded by AFG3L2 and SPG7 before SMDT1/EMRE assembly with the uniporter complex, limiting the availability of SMDT1/EMRE for MCU assembly and promoting efficient assembly of gatekeeper subunits with MCU.

The protein localises to the mitochondrion inner membrane. In terms of biological role, essential regulatory subunit of the mitochondrial calcium uniporter complex (uniplex), a complex that mediates calcium uptake into mitochondria. Required to bridge the calcium-sensing proteins MICU1 with the calcium-conducting subunit MCU. Acts by mediating activation of MCU and retention of MICU1 to the MCU pore, in order to ensure tight regulation of the uniplex complex and appropriate responses to intracellular calcium signaling. The protein is Essential MCU regulator, mitochondrial of Bos taurus (Bovine).